The primary structure comprises 148 residues: MSEQQPRVIESKEIMTLLPHRYPFLLVDRVLDFKEGEWLKAIKNISVNEPCFTGHFPGEPILPGVLILEALAQAMGILAFKTLELKGGELFYFAGIDEARFKRPVLPGDQMELNVQVIKERRGITAFTGVATVNGEIACEAKLMCARR.

The active site involves histidine 55.

This sequence belongs to the thioester dehydratase family. FabZ subfamily.

The protein resides in the cytoplasm. It carries out the reaction a (3R)-hydroxyacyl-[ACP] = a (2E)-enoyl-[ACP] + H2O. Involved in unsaturated fatty acids biosynthesis. Catalyzes the dehydration of short chain beta-hydroxyacyl-ACPs and long chain saturated and unsaturated beta-hydroxyacyl-ACPs. The polypeptide is 3-hydroxyacyl-[acyl-carrier-protein] dehydratase FabZ (Haemophilus influenzae (strain PittEE)).